The primary structure comprises 174 residues: Auxin-responsive protein IAA2 (174 aa).

The short motif at 16–20 (LCLGL) is the EAR-like (transcriptional repression) element. The disordered stretch occupies residues 44–67 (FEETRDEEESTPPTKTQIVGWPPV). The 88-residue stretch at 77–164 (VSYVKVSMDG…SCKRLRIMKG (88 aa)) folds into the PB1 domain.

It belongs to the Aux/IAA family. As to quaternary structure, homodimers and heterodimers. Interacts with the auxin-responsive protein IAA1. Interacts with TPL. In terms of tissue distribution, preferentially expressed in vegetative organs.

It localises to the nucleus. In terms of biological role, aux/IAA proteins are short-lived transcriptional factors that function as repressors of early auxin response genes at low auxin concentrations. Repression is thought to result from the interaction with auxin response factors (ARFs), proteins that bind to the auxin-responsive promoter element (AuxRE). Formation of heterodimers with ARF proteins may alter their ability to modulate early auxin response genes expression. This Arabidopsis thaliana (Mouse-ear cress) protein is Auxin-responsive protein IAA2 (IAA2).